The sequence spans 110 residues: Period circadian protein (110 aa).

A disordered region spans residues 23–97 (VTNTSIAGTG…GGAGGGGGVT (75 aa)). A run of 12 repeats spans residues 30–31 (GT), 33–34 (GT), 36–37 (GT), 38–39 (GT), 40–41 (GT), 42–43 (GT), 44–45 (GT), 46–47 (GT), 48–49 (GT), 50–51 (GT), 52–53 (GT), and 54–55 (GT). The span at 30-63 (GTGGTGGTGTGTGTGTGTGTGTGTGTDTGTGTGT) shows a compositional bias: gly residues. Positions 30–79 (GTGGTGGTGTGTGTGTGTGTGTGTGTDTGTGTGTRNGTNSGTNSGTRTGT) are 24 X 2 AA approximate tandem repeats of G-T. Residues 56–57 (DT) form a 13; approximate repeat. A run of 3 repeats spans residues 58–59 (GT), 60–61 (GT), and 62–63 (GT). Residues 64-65 (RN) form a 17; approximate repeat. Low complexity predominate over residues 64–83 (RNGTNSGTNSGTRTGTASSY). Copy 18 of the repeat occupies 66-67 (GT). The stretch at 68–69 (NS) is one 19; approximate repeat. Repeat unit 20 spans residues 70-71 (GT). The 21; approximate repeat unit spans residues 72 to 73 (NS). Copy 22 of the repeat occupies 74–75 (GT). A 23; approximate repeat occupies 76–77 (RT). Repeat 24 spans residues 78 to 79 (GT). The span at 84–96 (RGGGGGAGGGGGV) shows a compositional bias: gly residues.

As to quaternary structure, forms a heterodimer with timeless (TIM); the complex then translocates into the nucleus. Phosphorylated with a circadian rhythmicity, probably by the double-time protein (dbt). Phosphorylation could be implicated in the stability of per monomer and in the formation of heterodimer per-tim.

The protein resides in the nucleus. The protein localises to the cytoplasm. It localises to the perinuclear region. In terms of biological role, essential for biological clock functions. Determines the period length of circadian and ultradian rhythms; an increase in PER dosage leads to shortened circadian rhythms and a decrease leads to lengthened circadian rhythms. Essential for the circadian rhythmicity of locomotor activity, eclosion behavior, and for the rhythmic component of the male courtship song that originates in the thoracic nervous system. The biological cycle depends on the rhythmic formation and nuclear localization of the TIM-PER complex. Light induces the degradation of TIM, which promotes elimination of PER. Nuclear activity of the heterodimer coordinatively regulates PER and TIM transcription through a negative feedback loop. Behaves as a negative element in circadian transcriptional loop. Does not appear to bind DNA, suggesting indirect transcriptional inhibition. The protein is Period circadian protein (per) of Drosophila erecta (Fruit fly).